The chain runs to 427 residues: Ceramide Synthase FUM18 (427 aa).

Asn20 carries an N-linked (GlcNAc...) asparagine glycan. Transmembrane regions (helical) follow at residues 38–58 (ILPL…IHIS), 131–151 (EQGW…LIWA), 173–193 (GLIK…VISV), 202–222 (YWLN…CYVY), 250–270 (YLGF…TWIV), and 335–355 (VSIL…FGFI). In terms of domain architecture, TLC spans 124-364 (RKVVRFSEQG…ICKVAIGVLD (241 aa)). The tract at residues 373–406 (SDVESDEEDSEPVANGSGWQQSQLQPGRRVGSNG) is disordered. N-linked (GlcNAc...) asparagine glycosylation is present at Asn387.

It belongs to the sphingosine N-acyltransferase family.

The protein resides in the endoplasmic reticulum membrane. It functions in the pathway mycotoxin biosynthesis. In terms of biological role, ceramide synthase; part of the gene cluster that mediates the biosynthesis of fumonisins B1 (FB1), B2 (FB2), B3 (FB3), and B4 (FB4), which are carcinogenic mycotoxins. Plays a role in self-protection from FB1 toxicity by contributing to ceramide synthesis. The biosynthesis starts with the FUM1-catalyzed carbon chain assembly from one molecule of acetyl-CoA, eight molecules of malonyl-CoA, and two molecules of methionine (in S-adenosyl form). The C18 polyketide chain is released from the enzyme by a nucleophilic attack of a carbanion, which is derived from R-carbon of alanine by decarboxylation, on the carbonyl carbon of polyketide acyl chain. This step is catalyzed by the pyridoxal 5'-phosphate-dependent aminoacyl transferase FUM8. The resultant 3-keto intermediate is then stereospecifically reduced to a 3-hydroxyl product by reductase FUM13. Subsequent oxidations at C-10 by the cytochrome P450 monooxygenase FUM2, C-14 and C-15 by FUM6, FUM12 or FUM15, tricarballylic esterification of the hydroxyl groups on C-14 and C-15 by acyltransferase FUM14, and C-5 hydroxylation by 2-keto-glutarate-dependent dioxygenase FUM3 furnish the biosynthesis of fumonisins. The tricarballylic moieties are most likely derived from the citric acid cycle, and their addition to the carbon backbone may involve FUM7, FUM10, FUM11 and FUM14. This Gibberella moniliformis (strain M3125 / FGSC 7600) (Maize ear and stalk rot fungus) protein is Ceramide Synthase FUM18.